The sequence spans 465 residues: Glutamate--tRNA ligase 1 (465 aa).

Residues 8 to 18 (PSPTGLMHLGN) carry the 'HIGH' region motif. The 'KMSKS' region motif lies at 249-253 (PLSKR). Lysine 252 serves as a coordination point for ATP.

The protein belongs to the class-I aminoacyl-tRNA synthetase family. Glutamate--tRNA ligase type 1 subfamily. Monomer.

The protein localises to the cytoplasm. The catalysed reaction is tRNA(Glu) + L-glutamate + ATP = L-glutamyl-tRNA(Glu) + AMP + diphosphate. Its function is as follows. Catalyzes the attachment of glutamate to tRNA(Glu) in a two-step reaction: glutamate is first activated by ATP to form Glu-AMP and then transferred to the acceptor end of tRNA(Glu). The sequence is that of Glutamate--tRNA ligase 1 from Coxiella burnetii (strain CbuG_Q212) (Coxiella burnetii (strain Q212)).